The primary structure comprises 65 residues: Large ribosomal subunit protein bL35 (65 aa).

The segment covering 1 to 16 (MPKMKTKSSAKKRFKV) has biased composition (basic residues). Positions 1–26 (MPKMKTKSSAKKRFKVRSSGGIKRSQ) are disordered.

This sequence belongs to the bacterial ribosomal protein bL35 family.

In Azoarcus sp. (strain BH72), this protein is Large ribosomal subunit protein bL35.